Reading from the N-terminus, the 173-residue chain is Large ribosomal subunit protein uL10 (173 aa).

Belongs to the universal ribosomal protein uL10 family. As to quaternary structure, part of the ribosomal stalk of the 50S ribosomal subunit. The N-terminus interacts with L11 and the large rRNA to form the base of the stalk. The C-terminus forms an elongated spine to which L12 dimers bind in a sequential fashion forming a multimeric L10(L12)X complex.

Forms part of the ribosomal stalk, playing a central role in the interaction of the ribosome with GTP-bound translation factors. The chain is Large ribosomal subunit protein uL10 from Bifidobacterium longum (strain DJO10A).